The primary structure comprises 455 residues: Bifunctional protein GlmU (455 aa).

The interval 1–230 (MVNKNAIILA…FDESMGVNDR (230 aa)) is pyrophosphorylase. Residues 9–12 (LAAG), Lys-23, Gln-73, 78–79 (GT), 101–103 (SGD), Gly-140, Glu-155, Asn-170, and Asn-228 each bind UDP-N-acetyl-alpha-D-glucosamine. Asp-103 contacts Mg(2+). Asn-228 serves as a coordination point for Mg(2+). A linker region spans residues 231 to 251 (SALAKATKIMQKRINTQLMKD). The N-acetyltransferase stretch occupies residues 252-455 (GVTLVDPETA…KPGYAKKLPW (204 aa)). Residues Arg-333 and Lys-351 each coordinate UDP-N-acetyl-alpha-D-glucosamine. His-363 (proton acceptor) is an active-site residue. 2 residues coordinate UDP-N-acetyl-alpha-D-glucosamine: Tyr-366 and Asn-377. Residues 386-387 (NY), Ser-405, Ala-423, and Arg-440 contribute to the acetyl-CoA site.

The protein in the N-terminal section; belongs to the N-acetylglucosamine-1-phosphate uridyltransferase family. In the C-terminal section; belongs to the transferase hexapeptide repeat family. As to quaternary structure, homotrimer. Mg(2+) serves as cofactor.

The protein resides in the cytoplasm. The enzyme catalyses alpha-D-glucosamine 1-phosphate + acetyl-CoA = N-acetyl-alpha-D-glucosamine 1-phosphate + CoA + H(+). It catalyses the reaction N-acetyl-alpha-D-glucosamine 1-phosphate + UTP + H(+) = UDP-N-acetyl-alpha-D-glucosamine + diphosphate. The protein operates within nucleotide-sugar biosynthesis; UDP-N-acetyl-alpha-D-glucosamine biosynthesis; N-acetyl-alpha-D-glucosamine 1-phosphate from alpha-D-glucosamine 6-phosphate (route II): step 2/2. It functions in the pathway nucleotide-sugar biosynthesis; UDP-N-acetyl-alpha-D-glucosamine biosynthesis; UDP-N-acetyl-alpha-D-glucosamine from N-acetyl-alpha-D-glucosamine 1-phosphate: step 1/1. Its pathway is bacterial outer membrane biogenesis; LPS lipid A biosynthesis. Its function is as follows. Catalyzes the last two sequential reactions in the de novo biosynthetic pathway for UDP-N-acetylglucosamine (UDP-GlcNAc). The C-terminal domain catalyzes the transfer of acetyl group from acetyl coenzyme A to glucosamine-1-phosphate (GlcN-1-P) to produce N-acetylglucosamine-1-phosphate (GlcNAc-1-P), which is converted into UDP-GlcNAc by the transfer of uridine 5-monophosphate (from uridine 5-triphosphate), a reaction catalyzed by the N-terminal domain. The chain is Bifunctional protein GlmU from Limosilactobacillus fermentum (strain NBRC 3956 / LMG 18251) (Lactobacillus fermentum).